Consider the following 587-residue polypeptide: Kelch-like protein 3 (587 aa).

Residues 1-24 form a disordered region; sequence MEGESVKPSPQPTAQAEDEEKNRR. In terms of domain architecture, BTB spans 50-117; sequence CDVMIVAEDV…IYTAEIEVTE (68 aa). The BACK domain maps to 152–254; that stretch reads CLGIRAFADV…PRDYLVQTVE (103 aa). Threonine 295 is subject to Phosphothreonine. 6 Kelch repeats span residues 302 to 347, 348 to 394, 396 to 441, 442 to 490, 491 to 537, and 539 to 585; these read VMIV…FMAG, HVYA…VLND, LYAV…VVEG, KLYA…VLSG, QLYA…AVNG, and LYVV…VIHK. Threonine 375 is modified (phosphothreonine). Residues serine 376 and serine 433 each carry the phosphoserine modification.

This sequence belongs to the KLHL3 family. As to quaternary structure, homodimer. Component of the BCR(KLHL3) E3 ubiquitin ligase complex, at least composed of CUL3 and KLHL3 and RBX1. Interacts with CLDN8. In terms of processing, phosphorylation at Ser-433 by PKA or PKC decreases the interaction with WNK1 and WNK4, leading to inhibit their degradation by the BCR(KLHL3) complex. Phosphorylated at Ser-433 by PKC in response to angiotensin II signaling, decreasing ability to promote degradation of WNK1 and WNK4, leading to activation of Na-Cl cotransporter SLC12A3/NCC. Phosphorylation at Ser-433 is increased by insulin. Dephosphorylated at Ser-433 by calcineurin PPP3CA, promoting degradation of WNK1 and WNK4. As to expression, present at high level in brain and kidney (at protein level). Weakly expressed in other tissues. In kidney, predominantly localizes to the distal convoluted tubule (DCT) and collecting duct, with apical localization in the DCT (at protein level).

It localises to the cytoplasm. The protein localises to the cytosol. The protein resides in the cytoskeleton. The protein operates within protein modification; protein ubiquitination. Its function is as follows. Substrate-specific adapter of a BCR (BTB-CUL3-RBX1) E3 ubiquitin ligase complex that acts as a regulator of ion transport in the distal nephron. The BCR(KLHL3) complex acts by mediating ubiquitination and degradation of WNK1 and WNK4, two activators of Na-Cl cotransporter SLC12A3/NCC in distal convoluted tubule cells of kidney, thereby regulating NaCl reabsorption. The BCR(KLHL3) complex also mediates ubiquitination of CLDN8, a tight-junction protein required for paracellular chloride transport in the kidney, leading to its degradation. This chain is Kelch-like protein 3, found in Mus musculus (Mouse).